The following is a 182-amino-acid chain: ATP-dependent protease subunit HslV (182 aa).

The active site involves Thr12. The Na(+) site is built by Ala167, Cys170, and Thr173.

It belongs to the peptidase T1B family. HslV subfamily. In terms of assembly, a double ring-shaped homohexamer of HslV is capped on each side by a ring-shaped HslU homohexamer. The assembly of the HslU/HslV complex is dependent on binding of ATP.

The protein resides in the cytoplasm. The enzyme catalyses ATP-dependent cleavage of peptide bonds with broad specificity.. Its activity is regulated as follows. Allosterically activated by HslU binding. Functionally, protease subunit of a proteasome-like degradation complex believed to be a general protein degrading machinery. The sequence is that of ATP-dependent protease subunit HslV from Chlorobium chlorochromatii (strain CaD3).